The primary structure comprises 248 residues: Large ribosomal subunit protein uL4 (248 aa).

Disordered stretches follow at residues 48–96 (GTHK…PVPR) and 210–248 (AFSE…RTGA). A compositionally biased stretch (basic and acidic residues) spans 233-248 (DATKARSSRHDDRTGA).

It belongs to the universal ribosomal protein uL4 family. Part of the 50S ribosomal subunit.

In terms of biological role, one of the primary rRNA binding proteins, this protein initially binds near the 5'-end of the 23S rRNA. It is important during the early stages of 50S assembly. It makes multiple contacts with different domains of the 23S rRNA in the assembled 50S subunit and ribosome. Its function is as follows. Forms part of the polypeptide exit tunnel. This is Large ribosomal subunit protein uL4 from Tropheryma whipplei (strain Twist) (Whipple's bacillus).